Here is a 513-residue protein sequence, read N- to C-terminus: Putative GMP synthase [glutamine-hydrolyzing] (513 aa).

One can recognise a Glutamine amidotransferase type-1 domain in the interval 8–198; the sequence is MIVVLDFGGQ…AFAVCGCEGN (191 aa). The Nucleophile role is filled by Cys-85. Glu-174 is an active-site residue. In terms of domain architecture, GMPS ATP-PPase spans 199–388; sequence WSMENFIELE…LGIPDEVVWR (190 aa). Residue 226-232 coordinates ATP; it reads SGGVDSS.

In terms of assembly, homodimer.

It carries out the reaction XMP + L-glutamine + ATP + H2O = GMP + L-glutamate + AMP + diphosphate + 2 H(+). The protein operates within purine metabolism; GMP biosynthesis; GMP from XMP (L-Gln route): step 1/1. Functionally, catalyzes the synthesis of GMP from XMP. The sequence is that of Putative GMP synthase [glutamine-hydrolyzing] (guaA) from Halalkalibacterium halodurans (strain ATCC BAA-125 / DSM 18197 / FERM 7344 / JCM 9153 / C-125) (Bacillus halodurans).